The following is a 323-amino-acid chain: Protein translocase subunit SecF (323 aa).

Residues 1–22 (MAQEYTVEQLNHGRKVYDFMRW) lie on the Cytoplasmic side of the membrane. The chain crosses the membrane as a helical span at residues 23-43 (DYWAFGISGLLLIAAIVIMGV). Topologically, residues 44-142 (RGFNWGLDFT…FVGPSVGADL (99 aa)) are periplasmic. A helical transmembrane segment spans residues 143-163 (AQTGAMALMAALLSILVYVGF). The Cytoplasmic segment spans residues 164–170 (RFEWRLA). Residues 171-191 (AGVVIALAHDVIITLGILSLF) form a helical membrane-spanning segment. The Periplasmic portion of the chain corresponds to 192-196 (HIEID). A helical transmembrane segment spans residues 197–217 (LTIVASLMSVIGYSLNDSIVV). The Cytoplasmic portion of the chain corresponds to 218 to 247 (SDRIRENFRKIRRGTPYEIFNVSLTQTLHR). Residues 248 to 270 (TLITSGTTLMVILMLYLFGGPVL) form a helical membrane-spanning segment. Topologically, residues 271 to 280 (EGFSLTMLIG) are periplasmic. Residues 281 to 301 (VSIGTASSIYVASALALKLGM) traverse the membrane as a helical segment. Over 302–323 (KREHMLQQKVEKEGADQPSILP) the chain is Cytoplasmic.

Belongs to the SecD/SecF family. SecF subfamily. Forms a complex with SecD. Part of the essential Sec protein translocation apparatus which comprises SecA, SecYEG and auxiliary proteins SecDF-YajC and YidC.

Its subcellular location is the cell inner membrane. Part of the Sec protein translocase complex. Interacts with the SecYEG preprotein conducting channel. SecDF uses the proton motive force (PMF) to complete protein translocation after the ATP-dependent function of SecA. In Escherichia coli O157:H7, this protein is Protein translocase subunit SecF.